A 554-amino-acid polypeptide reads, in one-letter code: Inactive sesquithujene synthase (554 aa).

2 residues coordinate Mg(2+): Asp308 and Asp312. Positions 308, 312, 449, and 452 each coordinate substrate. Positions 308–312 (DDMFD) match the DDXXD motif motif. Residues Asn452, Ser456, and Glu460 each coordinate Mg(2+).

Belongs to the terpene synthase family. As to quaternary structure, monomer. Mg(2+) serves as cofactor. The cofactor is Mn(2+).

The protein resides in the cytoplasm. It participates in secondary metabolite biosynthesis; terpenoid biosynthesis. Functionally, non-functional sesquiterpene synthase having less than 1% of the activity found in cv. Delprim. The sequence is that of Inactive sesquithujene synthase from Zea mays (Maize).